The sequence spans 291 residues: RPE-retinal G protein-coupled receptor (291 aa).

At 1–15 (MAETSALPTGFGELE) the chain is on the extracellular side. A helical transmembrane segment spans residues 16 to 36 (VLAVGMVLLVEALSGLSLNTL). The Cytoplasmic segment spans residues 37–52 (TIFSFCKTPELRTPCH). The chain crosses the membrane as a helical span at residues 53–73 (LLVLSLALADSGISLNALVAA). The Extracellular portion of the chain corresponds to 74–91 (TSSLLRRWPYGSDGCQAH). Cys-88 and Cys-162 are joined by a disulfide. Residues 92-112 (GFQGFVTALASICSSAAIAWG) form a helical membrane-spanning segment. Residues 113–130 (RYHHYCTRSQLAWNSAVS) are Cytoplasmic-facing. A helical membrane pass occupies residues 131 to 151 (LVLFVWLSSAFWAALPLLGWG). At 152–175 (HYDYEPLGTCCTLDYSKGDRNFTS) the chain is on the extracellular side. Asn-172 is a glycosylation site (N-linked (GlcNAc...) asparagine). The chain crosses the membrane as a helical span at residues 176-196 (FLFTMSFFNFAMPLFITITSY). At 197-219 (SLMEQKLGKSGHLQVNTTLPART) the chain is on the cytoplasmic side. Residues 220 to 240 (LLLGWGPYAILYLYAVIADVT) traverse the membrane as a helical segment. The Extracellular portion of the chain corresponds to 241-247 (SISPKLQ). Residues 248–268 (MVPALIAKMVPTINAINYALG) traverse the membrane as a helical segment. Lys-255 is modified (N6-(retinylidene)lysine). Residues 269–291 (NEMVCRGIWQCLSPQKREKDRTK) lie on the Cytoplasmic side of the membrane.

It belongs to the G-protein coupled receptor 1 family. Opsin subfamily. Post-translationally, covalently binds all-trans- and 11-cis-retinal. In terms of tissue distribution, preferentially expressed at high levels in the retinal pigment epithelium (RPE) and Mueller cells of the neural retina.

It localises to the membrane. Its function is as follows. Receptor for all-trans- and 11-cis-retinal. Binds preferentially to the former and may catalyze the isomerization of the chromophore by a retinochrome-like mechanism. In Homo sapiens (Human), this protein is RPE-retinal G protein-coupled receptor (RGR).